Consider the following 360-residue polypeptide: D-alanine--D-alanine ligase (360 aa).

Positions 149 to 353 constitute an ATP-grasp domain; the sequence is KKLMAAEGLP…YEELLDVLVQ (205 aa). 176-231 is an ATP binding site; it reads KNLLGLPVFVKPARGGSSIGISRVTAWEDFNKAVGLARAHDEKVIVESEIVGSEVE. Mg(2+) is bound by residues aspartate 308, glutamate 320, and asparagine 322.

This sequence belongs to the D-alanine--D-alanine ligase family. Mg(2+) is required as a cofactor. Requires Mn(2+) as cofactor.

Its subcellular location is the cytoplasm. The enzyme catalyses 2 D-alanine + ATP = D-alanyl-D-alanine + ADP + phosphate + H(+). Its pathway is cell wall biogenesis; peptidoglycan biosynthesis. Functionally, cell wall formation. This chain is D-alanine--D-alanine ligase, found in Corynebacterium glutamicum (strain ATCC 13032 / DSM 20300 / JCM 1318 / BCRC 11384 / CCUG 27702 / LMG 3730 / NBRC 12168 / NCIMB 10025 / NRRL B-2784 / 534).